Here is a 61-residue protein sequence, read N- to C-terminus: Small ribosomal subunit protein bS21 (61 aa).

This sequence belongs to the bacterial ribosomal protein bS21 family.

This chain is Small ribosomal subunit protein bS21, found in Methylacidiphilum infernorum (isolate V4) (Methylokorus infernorum (strain V4)).